A 507-amino-acid polypeptide reads, in one-letter code: FLYWCH transcription factor 1 (507 aa).

The segment covering 1–26 (MYSPESMNSNISSPSPPSSSSLNAPS) has biased composition (low complexity). The tract at residues 1–51 (MYSPESMNSNISSPSPPSSSSLNAPSLADAPEVRSDDGEAETSEPSTSVTA) is disordered. The FLYWCH-type zinc finger occupies 135 to 192 (KKTRLKVFSNGFFMTFDKLSSCQKKYFWRCEYKNTCKARMHTDIVTEKILTFIHEHNH).

In terms of biological role, probable transcription factor. Binds to the DNA sequence motif 5'-[AG]GGCGCCG-3' in the promoters of target genes, including micro-RNA genes, in order to repress expression, and acting redundantly with flh-2. This chain is FLYWCH transcription factor 1, found in Caenorhabditis elegans.